The sequence spans 447 residues: Na(+)-translocating NADH-quinone reductase subunit A (447 aa).

Belongs to the NqrA family. In terms of assembly, composed of six subunits; NqrA, NqrB, NqrC, NqrD, NqrE and NqrF.

It catalyses the reaction a ubiquinone + n Na(+)(in) + NADH + H(+) = a ubiquinol + n Na(+)(out) + NAD(+). In terms of biological role, NQR complex catalyzes the reduction of ubiquinone-1 to ubiquinol by two successive reactions, coupled with the transport of Na(+) ions from the cytoplasm to the periplasm. NqrA to NqrE are probably involved in the second step, the conversion of ubisemiquinone to ubiquinol. The sequence is that of Na(+)-translocating NADH-quinone reductase subunit A from Yersinia pestis bv. Antiqua (strain Angola).